We begin with the raw amino-acid sequence, 312 residues long: MAMKRKKISVIGAGFTGATTAFLLAQKELGDVVLVDIPQLENPTKGKALDMLEASPVLGFDANIIGTSDYADTADSDIVVITAGIARKPGMSRDDLVTTNQKIMKQVTKEVVKYSPNCYIIVLTNPVDAMTYTVFQESGFPKNRVIGQSGVLDTARFRTFVAEELNISVKDVTGFVLGGHGDDMVPLVRYSYAGGIPLEKLIPKDRLDAIVERTRKGGGEIVNLLGNGSAYYAPAASLVEMVEAILKDQRRILPAIAYLEGEYGYEGIYLGVPTILGGNGIEKVIELELTEEEKAALAKSVESVKNVMRMLE.

NAD(+) contacts are provided by residues 12-17 and D36; that span reads GAGFTG. Substrate contacts are provided by R87 and R93. Residues N100 and 123 to 125 each bind NAD(+); that span reads LTN. A substrate-binding site is contributed by N125. At S149 the chain carries Phosphoserine. R156 contacts substrate. H180 serves as the catalytic Proton acceptor.

The protein belongs to the LDH/MDH superfamily. MDH type 3 family.

It carries out the reaction (S)-malate + NAD(+) = oxaloacetate + NADH + H(+). Functionally, catalyzes the reversible oxidation of malate to oxaloacetate. This is Malate dehydrogenase from Geobacillus kaustophilus (strain HTA426).